Here is a 213-residue protein sequence, read N- to C-terminus: A-type ATP synthase subunit D (213 aa).

This sequence belongs to the V-ATPase D subunit family. Has multiple subunits with at least A(3), B(3), C, D, E, F, H, I and proteolipid K(x).

It is found in the cell membrane. Its function is as follows. Component of the A-type ATP synthase that produces ATP from ADP in the presence of a proton gradient across the membrane. The polypeptide is A-type ATP synthase subunit D (Thermoplasma acidophilum (strain ATCC 25905 / DSM 1728 / JCM 9062 / NBRC 15155 / AMRC-C165)).